The chain runs to 249 residues: tRNA pseudouridine synthase A (249 aa).

D52 acts as the Nucleophile in catalysis. Residue Y111 coordinates substrate.

Belongs to the tRNA pseudouridine synthase TruA family. As to quaternary structure, homodimer.

The catalysed reaction is uridine(38/39/40) in tRNA = pseudouridine(38/39/40) in tRNA. Its function is as follows. Formation of pseudouridine at positions 38, 39 and 40 in the anticodon stem and loop of transfer RNAs. This Caulobacter sp. (strain K31) protein is tRNA pseudouridine synthase A.